A 194-amino-acid chain; its full sequence is Peptidyl-tRNA hydrolase (194 aa).

Tyr16 is a binding site for tRNA. His21 acts as the Proton acceptor in catalysis. Residues Phe67, Asn69, and Asn115 each coordinate tRNA.

The protein belongs to the PTH family. As to quaternary structure, monomer.

The protein resides in the cytoplasm. The enzyme catalyses an N-acyl-L-alpha-aminoacyl-tRNA + H2O = an N-acyl-L-amino acid + a tRNA + H(+). Hydrolyzes ribosome-free peptidyl-tRNAs (with 1 or more amino acids incorporated), which drop off the ribosome during protein synthesis, or as a result of ribosome stalling. Functionally, catalyzes the release of premature peptidyl moieties from peptidyl-tRNA molecules trapped in stalled 50S ribosomal subunits, and thus maintains levels of free tRNAs and 50S ribosomes. This chain is Peptidyl-tRNA hydrolase, found in Klebsiella pneumoniae (strain 342).